A 395-amino-acid polypeptide reads, in one-letter code: Acetate kinase (395 aa).

Asn7 is a binding site for Mg(2+). An ATP-binding site is contributed by Lys14. Arg85 provides a ligand contact to substrate. Catalysis depends on Asp142, which acts as the Proton donor/acceptor. Residues 202-206, 277-279, and 325-329 each bind ATP; these read HLGNG, DMR, and GIGEN. A Mg(2+)-binding site is contributed by Glu378.

Belongs to the acetokinase family. As to quaternary structure, homodimer. Mg(2+) serves as cofactor. Requires Mn(2+) as cofactor.

It is found in the cytoplasm. The enzyme catalyses acetate + ATP = acetyl phosphate + ADP. Its pathway is metabolic intermediate biosynthesis; acetyl-CoA biosynthesis; acetyl-CoA from acetate: step 1/2. In terms of biological role, catalyzes the formation of acetyl phosphate from acetate and ATP. Can also catalyze the reverse reaction. This is Acetate kinase from Deinococcus geothermalis (strain DSM 11300 / CIP 105573 / AG-3a).